The primary structure comprises 209 residues: Proteasome subunit beta (209 aa).

Positions 1-10 are cleaved as a propeptide — removed in mature form; by autocatalysis; sequence MVEQSDTMKG. The Nucleophile role is filled by Thr11.

This sequence belongs to the peptidase T1B family. As to quaternary structure, the 20S proteasome core is composed of 14 alpha and 14 beta subunits that assemble into four stacked heptameric rings, resulting in a barrel-shaped structure. The two inner rings, each composed of seven catalytic beta subunits, are sandwiched by two outer rings, each composed of seven alpha subunits. The catalytic chamber with the active sites is on the inside of the barrel. Has a gated structure, the ends of the cylinder being occluded by the N-termini of the alpha-subunits. Is capped at one or both ends by the proteasome regulatory ATPase, PAN.

Its subcellular location is the cytoplasm. It catalyses the reaction Cleavage of peptide bonds with very broad specificity.. Its activity is regulated as follows. The formation of the proteasomal ATPase PAN-20S proteasome complex, via the docking of the C-termini of PAN into the intersubunit pockets in the alpha-rings, triggers opening of the gate for substrate entry. Interconversion between the open-gate and close-gate conformations leads to a dynamic regulation of the 20S proteasome proteolysis activity. In terms of biological role, component of the proteasome core, a large protease complex with broad specificity involved in protein degradation. The chain is Proteasome subunit beta from Methanospirillum hungatei JF-1 (strain ATCC 27890 / DSM 864 / NBRC 100397 / JF-1).